The chain runs to 527 residues: Arginine--tRNA ligase (527 aa).

Residues 111–121 (ANPTGPLHIGH) carry the 'HIGH' region motif.

The protein belongs to the class-I aminoacyl-tRNA synthetase family. In terms of assembly, monomer.

The protein localises to the cytoplasm. The enzyme catalyses tRNA(Arg) + L-arginine + ATP = L-arginyl-tRNA(Arg) + AMP + diphosphate. The chain is Arginine--tRNA ligase from Campylobacter concisus (strain 13826).